Here is a 411-residue protein sequence, read N- to C-terminus: Serine--tRNA ligase (411 aa).

Residue 226 to 228 (TSE) participates in L-serine binding. 257–259 (RKE) provides a ligand contact to ATP. Glu-280 serves as a coordination point for L-serine. 344 to 347 (EISS) serves as a coordination point for ATP. Residue Ser-379 coordinates L-serine.

This sequence belongs to the class-II aminoacyl-tRNA synthetase family. Type-1 seryl-tRNA synthetase subfamily. In terms of assembly, homodimer. The tRNA molecule binds across the dimer.

Its subcellular location is the cytoplasm. The enzyme catalyses tRNA(Ser) + L-serine + ATP = L-seryl-tRNA(Ser) + AMP + diphosphate + H(+). It catalyses the reaction tRNA(Sec) + L-serine + ATP = L-seryl-tRNA(Sec) + AMP + diphosphate + H(+). Its pathway is aminoacyl-tRNA biosynthesis; selenocysteinyl-tRNA(Sec) biosynthesis; L-seryl-tRNA(Sec) from L-serine and tRNA(Sec): step 1/1. Catalyzes the attachment of serine to tRNA(Ser). Is also able to aminoacylate tRNA(Sec) with serine, to form the misacylated tRNA L-seryl-tRNA(Sec), which will be further converted into selenocysteinyl-tRNA(Sec). The protein is Serine--tRNA ligase of Campylobacter jejuni subsp. jejuni serotype O:23/36 (strain 81-176).